A 1347-amino-acid polypeptide reads, in one-letter code: Spermatogenesis-associated protein 31A1 (1347 aa).

Residues proline 23–leucine 43 traverse the membrane as a helical segment. Disordered regions lie at residues proline 55–arginine 89, glycine 106–isoleucine 235, glutamate 373–lysine 397, aspartate 628–lysine 658, proline 899–valine 955, and histidine 1085–valine 1160. Over residues glycine 60 to arginine 82 the composition is skewed to basic residues. The span at leucine 165–valine 178 shows a compositional bias: polar residues. Positions proline 198–lysine 222 are enriched in pro residues. Composition is skewed to polar residues over residues proline 631 to glutamate 651 and leucine 927 to alanine 948. 2 stretches are compositionally biased toward basic and acidic residues: residues histidine 1108–glycine 1127 and arginine 1137–glutamate 1146.

The protein belongs to the SPATA31 family.

The protein localises to the membrane. May play a role in spermatogenesis. The protein is Spermatogenesis-associated protein 31A1 of Homo sapiens (Human).